The chain runs to 172 residues: Inorganic pyrophosphatase (172 aa).

Substrate-binding residues include Lys29, Arg43, and Tyr55. Mg(2+) contacts are provided by Asp65, Asp70, and Asp102. Tyr141 serves as a coordination point for substrate.

This sequence belongs to the PPase family. In terms of assembly, homohexamer. Mg(2+) serves as cofactor.

It localises to the cytoplasm. The enzyme catalyses diphosphate + H2O = 2 phosphate + H(+). Its function is as follows. Catalyzes the hydrolysis of inorganic pyrophosphate (PPi) forming two phosphate ions. This is Inorganic pyrophosphatase from Rickettsia prowazekii (strain Madrid E).